A 302-amino-acid polypeptide reads, in one-letter code: NAD kinase 2 (302 aa).

Catalysis depends on Asp78, which acts as the Proton acceptor. Residues 78–79 (DG), 152–153 (NE), Asp182, 193–198 (TAYALS), and Ala217 each bind NAD(+).

The protein belongs to the NAD kinase family. The cofactor is a divalent metal cation.

It localises to the cytoplasm. The catalysed reaction is NAD(+) + ATP = ADP + NADP(+) + H(+). Functionally, involved in the regulation of the intracellular balance of NAD and NADP, and is a key enzyme in the biosynthesis of NADP. Catalyzes specifically the phosphorylation on 2'-hydroxyl of the adenosine moiety of NAD to yield NADP. This Prochlorococcus marinus (strain MIT 9313) protein is NAD kinase 2.